The chain runs to 729 residues: Rho GTPase-activating protein 28 (729 aa).

The interval Met1–Glu78 is disordered. The segment covering Leu37–Asn49 has biased composition (basic residues). Over residues Ser63–Ser76 the composition is skewed to low complexity. Phosphoserine is present on Ser70. Position 164 is a phosphothreonine (Thr164). The tract at residues Phe180 to Glu234 is disordered. Polar residues predominate over residues Ser221–Ala231. The region spanning Val384 to Trp581 is the Rho-GAP domain.

Functionally, GTPase activator for the Rho-type GTPases by converting them to an inactive GDP-bound state. This chain is Rho GTPase-activating protein 28 (Arhgap28), found in Mus musculus (Mouse).